We begin with the raw amino-acid sequence, 320 residues long: MQTRNAFSWLKKQITRSISVSLMIYILTRTSISSAYPIFAQQGYENPREATGRIVCANCHLANKPVEIEVPQAVLPDTVFEAVVRIPYDMQLKQVLANGKKGGLNVGAVLILPEGFELAPPDRISPEMKEKIGNLSFQSYRPNKTNILVVGPVPGKKYSEITFPILSPDPATKKDVHFLKYPIYVGGNRGRGQIYPDGNKSNNTVYNATAAGIVSKIIRKEKGGYEITITDASEGRQVVDIIPPGPELLVSEGESIKFDQPLTSNPNVGGFGQGDAEIVLQDPLRVQGLLFFLASVILAQIFLVLKKKQFEKVQLAEMNF.

Positions 1–35 (MQTRNAFSWLKKQITRSISVSLMIYILTRTSISSA) are cleaved as a signal peptide. Residues Tyr36, Cys56, Cys59, and His60 each coordinate heme. A helical transmembrane segment spans residues 286-306 (VQGLLFFLASVILAQIFLVLK).

The protein belongs to the cytochrome f family. The 4 large subunits of the cytochrome b6-f complex are cytochrome b6, subunit IV (17 kDa polypeptide, petD), cytochrome f and the Rieske protein, while the 4 small subunits are PetG, PetL, PetM and PetN. The complex functions as a dimer. Requires heme as cofactor.

It localises to the plastid. Its subcellular location is the chloroplast thylakoid membrane. In terms of biological role, component of the cytochrome b6-f complex, which mediates electron transfer between photosystem II (PSII) and photosystem I (PSI), cyclic electron flow around PSI, and state transitions. This chain is Cytochrome f, found in Solanum bulbocastanum (Wild potato).